The chain runs to 371 residues: Pyruvate dehydrogenase E1 component subunit alpha (371 aa).

In terms of assembly, heterodimer of an alpha and a beta chain. It depends on thiamine diphosphate as a cofactor.

It carries out the reaction N(6)-[(R)-lipoyl]-L-lysyl-[protein] + pyruvate + H(+) = N(6)-[(R)-S(8)-acetyldihydrolipoyl]-L-lysyl-[protein] + CO2. Activity of the E1 module is inhibited by the pyruvate dehydrogenase inhibitor PdhI. The pyruvate dehydrogenase complex catalyzes the overall conversion of pyruvate to acetyl-CoA and CO(2). It contains multiple copies of three enzymatic components: pyruvate dehydrogenase (E1), dihydrolipoamide acetyltransferase (E2) and lipoamide dehydrogenase (E3). Functionally, the B.subtilis PDH complex also possesses branched-chain 2-oxoacid dehydrogenase (BCDH) activity. The chain is Pyruvate dehydrogenase E1 component subunit alpha from Bacillus subtilis (strain 168).